The following is a 186-amino-acid chain: dCTP deaminase (186 aa).

107 to 112 (KSTYAR) is a dCTP binding site. Glutamate 133 acts as the Proton donor/acceptor in catalysis. Positions 152, 166, and 176 each coordinate dCTP.

The protein belongs to the dCTP deaminase family. Homotrimer.

The enzyme catalyses dCTP + H2O + H(+) = dUTP + NH4(+). It participates in pyrimidine metabolism; dUMP biosynthesis; dUMP from dCTP (dUTP route): step 1/2. Catalyzes the deamination of dCTP to dUTP. The sequence is that of dCTP deaminase from Campylobacter jejuni subsp. jejuni serotype O:2 (strain ATCC 700819 / NCTC 11168).